An 831-amino-acid chain; its full sequence is Prickle-like protein 1 (831 aa).

Residues 14–122 form the PET domain; that stretch reads FGCQRSSTSD…TIKLLSRAMM (109 aa). LIM zinc-binding domains follow at residues 124-189, 189-249, and 249-313; these read AVCE…LLKP, PRCS…LYAE, and EYCE…EDIH. Residues 314–346 are disordered; sequence ASDSSDSAFQSARSRDSRRSVRMGRSSRSADQC. A phosphoserine mark is found at serine 315, serine 591, and serine 594. Disordered regions lie at residues 664-688 and 763-831; these read EERGSRPHHHRHRRSRKSRSDNALN and CSSS…CIIS. The segment covering 669 to 680 has biased composition (basic residues); that stretch reads RPHHHRHRRSRK. At serine 683 the chain carries Phosphoserine. A compositionally biased stretch (polar residues) spans 797–812; sequence DLSSPASALPTPQFNQ. Positions 815–831 are enriched in basic residues; sequence TKSKKKKGHRGKNCIIS. Cysteine 828 is subject to Cysteine methyl ester. Cysteine 828 carries S-farnesyl cysteine lipidation. The propeptide at 829–831 is removed in mature form; the sequence is IIS.

The protein belongs to the prickle / espinas / testin family. Interacts with REST.

It is found in the nucleus membrane. The protein resides in the cytoplasm. The protein localises to the cytosol. In terms of biological role, involved in the planar cell polarity pathway that controls convergent extension during gastrulation and neural tube closure. Convergent extension is a complex morphogenetic process during which cells elongate, move mediolaterally, and intercalate between neighboring cells, leading to convergence toward the mediolateral axis and extension along the anteroposterior axis. Necessary for nuclear localization of REST. May serve as nuclear receptor. This Rattus norvegicus (Rat) protein is Prickle-like protein 1 (Prickle1).